Reading from the N-terminus, the 20-residue chain is Ferric reductase A (20 aa).

In terms of assembly, monomer.

It carries out the reaction 2 a Fe(II)-siderophore + NAD(+) + H(+) = 2 a Fe(III)-siderophore + NADH. Reductase activity that acts on Fe(3+)-chelates and NADH as an electron donor and requires the presence of FMN for full activity. May play a role in iron uptake. The protein is Ferric reductase A (ferA) of Paracoccus denitrificans.